Consider the following 454-residue polypeptide: Histidine--tRNA ligase (454 aa).

Belongs to the class-II aminoacyl-tRNA synthetase family. As to quaternary structure, homodimer.

It localises to the cytoplasm. It catalyses the reaction tRNA(His) + L-histidine + ATP = L-histidyl-tRNA(His) + AMP + diphosphate + H(+). In Bacteroides fragilis (strain ATCC 25285 / DSM 2151 / CCUG 4856 / JCM 11019 / LMG 10263 / NCTC 9343 / Onslow / VPI 2553 / EN-2), this protein is Histidine--tRNA ligase.